Reading from the N-terminus, the 517-residue chain is Glutamate--cysteine ligase (517 aa).

The protein belongs to the glutamate--cysteine ligase type 1 family. Type 1 subfamily.

The enzyme catalyses L-cysteine + L-glutamate + ATP = gamma-L-glutamyl-L-cysteine + ADP + phosphate + H(+). It functions in the pathway sulfur metabolism; glutathione biosynthesis; glutathione from L-cysteine and L-glutamate: step 1/2. In Pectobacterium atrosepticum (strain SCRI 1043 / ATCC BAA-672) (Erwinia carotovora subsp. atroseptica), this protein is Glutamate--cysteine ligase.